The sequence spans 101 residues: NAD(P)H-quinone oxidoreductase subunit 4L, chloroplastic (101 aa).

The next 3 helical transmembrane spans lie at 2–22, 32–52, and 61–81; these read MLEY…YGLI, MCLE…SDLF, and IFSI…PAIV.

This sequence belongs to the complex I subunit 4L family. NDH is composed of at least 16 different subunits, 5 of which are encoded in the nucleus.

The protein localises to the plastid. The protein resides in the chloroplast thylakoid membrane. It carries out the reaction a plastoquinone + NADH + (n+1) H(+)(in) = a plastoquinol + NAD(+) + n H(+)(out). The enzyme catalyses a plastoquinone + NADPH + (n+1) H(+)(in) = a plastoquinol + NADP(+) + n H(+)(out). Its function is as follows. NDH shuttles electrons from NAD(P)H:plastoquinone, via FMN and iron-sulfur (Fe-S) centers, to quinones in the photosynthetic chain and possibly in a chloroplast respiratory chain. The immediate electron acceptor for the enzyme in this species is believed to be plastoquinone. Couples the redox reaction to proton translocation, and thus conserves the redox energy in a proton gradient. The polypeptide is NAD(P)H-quinone oxidoreductase subunit 4L, chloroplastic (Acorus calamus var. americanus (American sweet flag)).